Reading from the N-terminus, the 574-residue chain is Membrane protein insertase YidC (574 aa).

6 helical membrane-spanning segments follow: residues 6–26 (VFLI…WGKD), 356–376 (FSIM…LHSF), 380–400 (WGWA…PLSA), 447–467 (GGCL…WVLV), 489–509 (PYFI…KLTP), and 525–545 (PLVF…YWVV).

This sequence belongs to the OXA1/ALB3/YidC family. Type 1 subfamily. Interacts with the Sec translocase complex via SecD. Specifically interacts with transmembrane segments of nascent integral membrane proteins during membrane integration.

It is found in the cell inner membrane. Functionally, required for the insertion and/or proper folding and/or complex formation of integral membrane proteins into the membrane. Involved in integration of membrane proteins that insert both dependently and independently of the Sec translocase complex, as well as at least some lipoproteins. Aids folding of multispanning membrane proteins. The polypeptide is Membrane protein insertase YidC (Xanthomonas axonopodis pv. citri (strain 306)).